Consider the following 252-residue polypeptide: Large ribosomal subunit protein uL29m (252 aa).

Residues 1–39 constitute a mitochondrion transit peptide; the sequence is MSTSTVIRPVARSLLQLRKAGNTPPAFLLPCLQSSSTTS. The segment covering 233–242 has biased composition (acidic residues); sequence EDVLAEAEGE. A disordered region spans residues 233–252; the sequence is EDVLAEAEGEAEPKPAQVTA.

It belongs to the universal ribosomal protein uL29 family. Component of the mitochondrial large ribosomal subunit. Mature mitochondrial ribosomes consist of a small (37S) and a large (54S) subunit. The 37S subunit contains at least 33 different proteins and 1 molecule of RNA (15S). The 54S subunit contains at least 45 different proteins and 1 molecule of RNA (21S).

Its subcellular location is the mitochondrion. In Botryotinia fuckeliana (strain B05.10) (Noble rot fungus), this protein is Large ribosomal subunit protein uL29m (mrpl4).